Consider the following 269-residue polypeptide: Shikimate dehydrogenase (NADP(+)) (269 aa).

Shikimate is bound by residues 22-24 (TLS) and Thr68. Lys72 serves as the catalytic Proton acceptor. Residues Asn93 and Asp104 each contribute to the shikimate site. Residues 128-132 (GAGGA), 152-157 (NRTKSR), and Phe210 contribute to the NADP(+) site. Tyr212 is a binding site for shikimate. An NADP(+)-binding site is contributed by Gly233.

Belongs to the shikimate dehydrogenase family. As to quaternary structure, homodimer.

It catalyses the reaction shikimate + NADP(+) = 3-dehydroshikimate + NADPH + H(+). The protein operates within metabolic intermediate biosynthesis; chorismate biosynthesis; chorismate from D-erythrose 4-phosphate and phosphoenolpyruvate: step 4/7. Involved in the biosynthesis of the chorismate, which leads to the biosynthesis of aromatic amino acids. Catalyzes the reversible NADPH linked reduction of 3-dehydroshikimate (DHSA) to yield shikimate (SA). The chain is Shikimate dehydrogenase (NADP(+)) from Saccharolobus solfataricus (strain ATCC 35092 / DSM 1617 / JCM 11322 / P2) (Sulfolobus solfataricus).